Reading from the N-terminus, the 456-residue chain is Sulfate adenylyltransferase (456 aa).

This sequence belongs to the sulfate adenylyltransferase family.

It carries out the reaction sulfate + ATP + H(+) = adenosine 5'-phosphosulfate + diphosphate. It participates in sulfur metabolism; hydrogen sulfide biosynthesis; sulfite from sulfate: step 1/3. In Archaeoglobus fulgidus (strain ATCC 49558 / DSM 4304 / JCM 9628 / NBRC 100126 / VC-16), this protein is Sulfate adenylyltransferase (sat).